We begin with the raw amino-acid sequence, 699 residues long: Polyribonucleotide nucleotidyltransferase (699 aa).

Mg(2+) is bound by residues Asp487 and Asp493. Positions 554–613 constitute a KH domain; the sequence is PRMLNMKINPEKIRDVIGKGGAVIRALQEETGTVIEIEDDGSITISSVSAEGAQKAKARI. Positions 623-691 constitute an S1 motif domain; the sequence is GKVYEGTVVR…ERGKIRLSMK (69 aa).

Belongs to the polyribonucleotide nucleotidyltransferase family. It depends on Mg(2+) as a cofactor.

It is found in the cytoplasm. The catalysed reaction is RNA(n+1) + phosphate = RNA(n) + a ribonucleoside 5'-diphosphate. Its function is as follows. Involved in mRNA degradation. Catalyzes the phosphorolysis of single-stranded polyribonucleotides processively in the 3'- to 5'-direction. This Azoarcus sp. (strain BH72) protein is Polyribonucleotide nucleotidyltransferase.